The following is a 249-amino-acid chain: MRVKIVSKPTSQLNYTVEKIKNISNKLGFEVVDIDFDYVIAVGGDGTLLRAVKLGKPVIAIKAGRRGLLMDVPVDKIEDALLRLKKGDYNEEEYMLLEMVHNDKVELGFNEIGILYDRPEAIKVGISFDTERVSVEGDGVLVSTPQGSSGWGMSATNSLLYKDLNAIEIIFVNPIFYYLRSVVIPPKSLILRLEDKGYPQTARVVVDGEVVTLIKTNQEITVRVSQHKAKILRFFKLDLIGEVLHAYHI.

Asp45 serves as the catalytic Proton acceptor. NAD(+)-binding positions include 45-46 (DG), Arg50, 110-111 (NE), Asp138, and 149-154 (SGWGMS).

It belongs to the NAD kinase family. The cofactor is a divalent metal cation.

The protein localises to the cytoplasm. The catalysed reaction is NAD(+) + ATP = ADP + NADP(+) + H(+). Involved in the regulation of the intracellular balance of NAD and NADP, and is a key enzyme in the biosynthesis of NADP. Catalyzes specifically the phosphorylation on 2'-hydroxyl of the adenosine moiety of NAD to yield NADP. This Saccharolobus solfataricus (strain ATCC 35092 / DSM 1617 / JCM 11322 / P2) (Sulfolobus solfataricus) protein is NAD kinase.